A 621-amino-acid polypeptide reads, in one-letter code: SH2B adapter protein 2 (621 aa).

At Tyr47 the chain carries Phosphotyrosine. Residue Ser130 is modified to Phosphoserine. The segment at 143–166 (RRSSPEPDGGATPKAAEPASEPRD) is disordered. The region spanning 186 to 299 (DIQREGALRF…WVADIQGCVD (114 aa)) is the PH domain. Ser303 carries the phosphoserine modification. The SH2 domain maps to 409 to 507 (WFHGTLSRVK…SADITLRSYV (99 aa)). Disordered stretches follow at residues 507–528 (VRAQGPPPDPGPAPNTAAPVPA) and 549–611 (PASP…LGRA). Residues 552 to 571 (PSNGAGASSSSGSSSSATSL) show a composition bias toward low complexity. A Phosphoserine modification is found at Ser597. Tyr618 is modified (phosphotyrosine).

Belongs to the SH2B adapter family. In terms of assembly, homodimer. Interacts with KIT/c-KIT, SHC1, EPOR, PDGFR, VAV1 and VAV3. Interacts (via N-terminal region) with SHC1. Interacts (via the phosphorylated C-terminus) with GRB2. Interacts (via its SH2 domain) with EPOR, INSR and KIT. Interacts with GRB2 after B-cell antigen receptor stimulation. Interacts (via PH domain) with VAV3. Interacts with NTRK1, NTRK2 and NTRK3 (phosphorylated); after stimulation of the receptor by its extracellular ligand and subsequent autophosphorylation of the receptor. Binds INSR, GRB2, ASB6 and CAP. Insulin stimulation leads to dissociation of CAP. Binds CBS only when SH2B2/APS has become phosphorylated. INSR binding does not depend on the phosphorylation of SH2B2/APS. Tyrosine phosphorylated by JAK2, KIT and other kinases activated by B-cell receptor in response to stimulation with cytokines, IL3, IL5, PDGF, IGF1, IGF2, CSF2/GM-CSF and cross-linking of the B-cell receptor complex. Strongly expressed in brain; also expressed in spleen, kidney and skeletal muscle, and at low levels in small intestine and bone marrow. Strongly expressed in B-cell lines, but not T-cell lines. Also expressed in myeloid and fibroblast cell lines.

The protein localises to the cytoplasm. It localises to the cell membrane. Adapter protein for several members of the tyrosine kinase receptor family. Involved in multiple signaling pathways. May be involved in coupling from immunoreceptor to Ras signaling. Acts as a negative regulator of cytokine signaling in collaboration with CBL. Binds to EPOR and suppresses EPO-induced STAT5 activation, possibly through a masking effect on STAT5 docking sites in EPOR. Suppresses PDGF-induced mitogenesis. May induce cytoskeletal reorganization via interaction with VAV3. This is SH2B adapter protein 2 (Sh2b2) from Mus musculus (Mouse).